Consider the following 72-residue polypeptide: MPFGLGLPEILVIGVIALLIFGPKKLPEMGSALGKAIRGFKSGVSDEPAPQQSASKETAPNPPQSLPSGKDS.

A helical transmembrane segment spans residues 1-21 (MPFGLGLPEILVIGVIALLIF). The disordered stretch occupies residues 41 to 72 (KSGVSDEPAPQQSASKETAPNPPQSLPSGKDS).

It belongs to the TatA/E family. Forms a complex with TatC.

It is found in the cell inner membrane. Its function is as follows. Part of the twin-arginine translocation (Tat) system that transports large folded proteins containing a characteristic twin-arginine motif in their signal peptide across membranes. TatA could form the protein-conducting channel of the Tat system. The polypeptide is Sec-independent protein translocase protein TatA (Gloeobacter violaceus (strain ATCC 29082 / PCC 7421)).